The following is a 1104-amino-acid chain: tRNA ligase 1 (1104 aa).

Lys152 (N6-AMP-lysine intermediate) is an active-site residue.

The protein belongs to the TRL1 family. The cofactor is Mg(2+). As to expression, mainly expressed in proliferating cells and tissues such as root meristems, the vasculature of developing plantlets, flowers and elongating tissue.

It is found in the nucleus. It localises to the cytoplasm. The catalysed reaction is ATP + (ribonucleotide)n-3'-hydroxyl + 5'-phospho-(ribonucleotide)m = (ribonucleotide)n+m + AMP + diphosphate.. With respect to regulation, requires the presence of NTP, preferentially ATP rather than dATP, UTP, CTP and GTP, respectively, to mediate ribonucleotide 5'-phosphorylation. Functionally, essential component of stress-response pathways entailing repair of RNA breaks with 2',3'-cyclic phosphate and 5'-OH ends. Tri-functional enzyme that repairs RNA breaks with 2',3'-cyclic-PO(4) and 5'-OH ends. The ligation activity requires three sequential enzymatic activities: opening of the 2'3'-cyclic phosphodiester bond of the 5' half-tRNA leaving a 2'-phosphomonoester (CPDase activity), phosphorylation of the 5' terminus of the 3' half-tRNA in the presence of ATP (kinase activity) and ligation of the two tRNA halves in an ATP-dependent reaction (ligase activity). Deficient in transferring AMP to pRNA(OH) to form AppRNA(OH) but proficient at sealing pre-adenylylated AppRNA(OH). CPDase and kinase reactions are almost insensitive to RNA length, whereas the ligase activity decreases with shorter RNA size. Can also splice DNA ended by a single 3'-terminal ribonucleoside 2',3'-cyclic-PO(4). Binds to mRNA, mature and immature. Exhibits tRNA ligase activity in vitro. Required for the splicing of precursor tRNA molecules containing introns. Can circularize an intron cleaved from a pre-tRNA by splicing endonuclease in vitro. Seems not involved in unfolded protein response (UPR) in the endoplasmic reticulum. Involved in auxin signaling and polar transport during organ morphogenesis. This Arabidopsis thaliana (Mouse-ear cress) protein is tRNA ligase 1.